The primary structure comprises 389 residues: Chalcone synthase 6 (389 aa).

Cys-164 is an active-site residue.

It belongs to the thiolase-like superfamily. Chalcone/stilbene synthases family.

The catalysed reaction is (E)-4-coumaroyl-CoA + 3 malonyl-CoA + 3 H(+) = 2',4,4',6'-tetrahydroxychalcone + 3 CO2 + 4 CoA. Its pathway is secondary metabolite biosynthesis; flavonoid biosynthesis. In terms of biological role, the primary product of this enzyme is 4,2',4',6'-tetrahydroxychalcone (also termed naringenin-chalcone or chalcone) which can under specific conditions spontaneously isomerize into naringenin. The polypeptide is Chalcone synthase 6 (CHS6) (Trifolium subterraneum (Subterranean clover)).